A 231-amino-acid polypeptide reads, in one-letter code: Dephospho-CoA kinase (231 aa).

One can recognise a DPCK domain in the interval 29–231 (RVGLTGGIAS…IAGALRFDRR (203 aa)). 37 to 42 (ASGKST) lines the ATP pocket.

Belongs to the CoaE family.

It localises to the cytoplasm. It catalyses the reaction 3'-dephospho-CoA + ATP = ADP + CoA + H(+). The protein operates within cofactor biosynthesis; coenzyme A biosynthesis; CoA from (R)-pantothenate: step 5/5. In terms of biological role, catalyzes the phosphorylation of the 3'-hydroxyl group of dephosphocoenzyme A to form coenzyme A. The chain is Dephospho-CoA kinase from Cutibacterium acnes (strain DSM 16379 / KPA171202) (Propionibacterium acnes).